A 61-amino-acid polypeptide reads, in one-letter code: Small ribosomal subunit protein uS14 (61 aa).

4 residues coordinate Zn(2+): Cys-24, Cys-27, Cys-40, and Cys-43.

The protein belongs to the universal ribosomal protein uS14 family. Zinc-binding uS14 subfamily. Part of the 30S ribosomal subunit. Contacts proteins S3 and S10. Requires Zn(2+) as cofactor.

In terms of biological role, binds 16S rRNA, required for the assembly of 30S particles and may also be responsible for determining the conformation of the 16S rRNA at the A site. The polypeptide is Small ribosomal subunit protein uS14 (Nitratidesulfovibrio vulgaris (strain DSM 19637 / Miyazaki F) (Desulfovibrio vulgaris)).